The chain runs to 397 residues: Probable protein phosphatase 2C 74 (397 aa).

Residues 133–391 enclose the PPM-type phosphatase domain; that stretch reads GFWVASRRGL…DDVTVMVVDL (259 aa). Positions 170, 171, 343, and 382 each coordinate Mn(2+).

It belongs to the PP2C family. Requires Mg(2+) as cofactor. Mn(2+) is required as a cofactor.

The enzyme catalyses O-phospho-L-seryl-[protein] + H2O = L-seryl-[protein] + phosphate. The catalysed reaction is O-phospho-L-threonyl-[protein] + H2O = L-threonyl-[protein] + phosphate. This chain is Probable protein phosphatase 2C 74, found in Oryza sativa subsp. japonica (Rice).